The primary structure comprises 254 residues: MRSIARRTAVGAALLLVMPVAVWISGWRWQPGEQSWLLKAAFWVTETVTQPWGVITHLILFGWFLWCLRFRIKAAFVLFAILAAAILVGQGVKSWIKDKVQEPRPFVIWLEKTHHIPVDEFYTLKRAERGNLVKEQLAEEKNIPQYLRSHWQKETGFAFPSGHTMFAASWALLAVGLLWPRRRTLTIAILLVWATGVMGSRLLLGMHWPRDLVVATLISWALVAVATWLAQRICGPLTPPAEENREIAQREQES.

A helical transmembrane segment spans residues arginine 2 to isoleucine 24. The Periplasmic segment spans residues serine 25–valine 54. Residues isoleucine 55–tryptophan 66 traverse the membrane as a helical segment. Residues cysteine 67 to arginine 71 are Cytoplasmic-facing. The chain crosses the membrane as a helical span at residues isoleucine 72–serine 94. Residues tryptophan 95–serine 161 lie on the Periplasmic side of the membrane. The interval lysine 97 to proline 105 is phosphatase sequence motif I. Residues proline 160–histidine 163 are phosphatase sequence motif II. Residues glycine 162 to glycine 176 traverse the membrane as a helical segment. Histidine 163 (proton donor; for a subset of substrates) is an active-site residue. Topologically, residues leucine 177–arginine 182 are cytoplasmic. The chain crosses the membrane as a helical span at residues arginine 183–leucine 202. Residues serine 200 to aspartate 211 are phosphatase sequence motif III. Over leucine 203–tryptophan 208 the chain is Periplasmic. Histidine 207 acts as the Nucleophile in catalysis. Residues proline 209–arginine 232 form a helical membrane-spanning segment. Topologically, residues isoleucine 233–serine 254 are cytoplasmic.

The protein belongs to the PA-phosphatase related phosphoesterase family. In terms of processing, the N-terminus is blocked.

It is found in the cell inner membrane. The protein resides in the cell outer membrane. It catalyses the reaction a 1,2-diacyl-sn-glycero-3-phospho-(1'-sn-glycero-3'-phosphate) + H2O = a 1,2-diacyl-sn-glycero-3-phospho-(1'-sn-glycerol) + phosphate. It carries out the reaction a 1,2-diacyl-sn-glycerol 3-diphosphate + H2O = a 1,2-diacyl-sn-glycero-3-phosphate + phosphate + H(+). The enzyme catalyses a 1,2-diacyl-sn-glycero-3-phosphate + H2O = a 1,2-diacyl-sn-glycerol + phosphate. The catalysed reaction is di-trans,octa-cis-undecaprenyl diphosphate + H2O = di-trans,octa-cis-undecaprenyl phosphate + phosphate + H(+). It participates in phospholipid metabolism; phosphatidylglycerol biosynthesis; phosphatidylglycerol from CDP-diacylglycerol: step 2/2. Functionally, catalyzes the dephosphorylation of diacylglycerol diphosphate (DGPP) to phosphatidate (PA) and the subsequent dephosphorylation of PA to diacylglycerol (DAG). Also has undecaprenyl pyrophosphate phosphatase activity, required for the biosynthesis of the lipid carrier undecaprenyl phosphate. Can also use lysophosphatidic acid (LPA) and phosphatidylglycerophosphate as substrates. The pattern of activities varies according to subcellular location, PGP phosphatase activity is higher in the cytoplasmic membrane, whereas PA and LPA phosphatase activities are higher in the outer membrane. Activity is independent of a divalent cation ion and insensitive to inhibition by N-ethylmaleimide. The sequence is that of Phosphatidylglycerophosphatase B (pgpB) from Escherichia coli O157:H7.